A 403-amino-acid chain; its full sequence is tRNA pseudouridine synthase 4 (403 aa).

The active-site Nucleophile is Asp-75.

It belongs to the pseudouridine synthase TruB family.

The protein localises to the nucleus. The protein resides in the mitochondrion. The enzyme catalyses uridine(55) in tRNA = pseudouridine(55) in tRNA. It carries out the reaction a uridine in mRNA = a pseudouridine in mRNA. In terms of biological role, responsible for synthesis of pseudouridine from uracil-55 in the psi GC loop of transfer RNAs. Also catalyzes pseudouridylation of mRNAs with the consensus sequence 5'-GGUUCRA-3'. This Saccharomyces cerevisiae (strain ATCC 204508 / S288c) (Baker's yeast) protein is tRNA pseudouridine synthase 4 (PUS4).